Reading from the N-terminus, the 401-residue chain is Forkhead box protein H1 (401 aa).

The interval 32-57 (MGPRDNSQLRPPEAESLSKTPKRRKK) is disordered. The segment at residues 64–163 (KPPYTYLAMI…QNTALCRRWQ (100 aa)) is a DNA-binding region (fork-head). The disordered stretch occupies residues 179-251 (VLHGQPYQPP…PSSSSETPLW (73 aa)). A compositionally biased stretch (pro residues) spans 185–195 (YQPPSPPPPPR). The span at 221–230 (GQSTAAQAGT) shows a compositional bias: polar residues. Positions 307 to 390 (LWGQLPTSYL…VSHPRDLAAP (84 aa)) are SMAD-interaction domain (SID). The Fast/FoxH1 motif 1 (FM1) signature appears at 311 to 315 (LPTSY). The Fast/FoxH1 motif 2 (FM2) signature appears at 321-327 (PNVVMPL). An SMAD interaction motif (SIM) motif is present at residues 363 to 384 (LDSLFQGVPPNKSIYDVWVSHP).

Interacts with the MH2 domains of SMAD2 and SMAD3.

Its subcellular location is the nucleus. Its function is as follows. Transcriptional activator. Recognizes and binds to the DNA sequence 5'-TGT[GT][GT]ATT-3'. Required for induction of the goosecoid (GSC) promoter by TGF-beta or activin signaling. Forms a transcriptionally active complex containing FOXH1/SMAD2/SMAD4 on a site on the GSC promoter called TARE (TGF-beta/activin response element). The chain is Forkhead box protein H1 (Foxh1) from Mus musculus (Mouse).